A 393-amino-acid polypeptide reads, in one-letter code: NAD(P)H-quinone oxidoreductase subunit H, chloroplastic (393 aa).

Belongs to the complex I 49 kDa subunit family. In terms of assembly, NDH is composed of at least 16 different subunits, 5 of which are encoded in the nucleus.

The protein resides in the plastid. It localises to the chloroplast thylakoid membrane. It catalyses the reaction a plastoquinone + NADH + (n+1) H(+)(in) = a plastoquinol + NAD(+) + n H(+)(out). It carries out the reaction a plastoquinone + NADPH + (n+1) H(+)(in) = a plastoquinol + NADP(+) + n H(+)(out). NDH shuttles electrons from NAD(P)H:plastoquinone, via FMN and iron-sulfur (Fe-S) centers, to quinones in the photosynthetic chain and possibly in a chloroplast respiratory chain. The immediate electron acceptor for the enzyme in this species is believed to be plastoquinone. Couples the redox reaction to proton translocation, and thus conserves the redox energy in a proton gradient. The sequence is that of NAD(P)H-quinone oxidoreductase subunit H, chloroplastic from Ipomoea purpurea (Common morning glory).